Consider the following 354-residue polypeptide: DNA polymerase IV (354 aa).

One can recognise a UmuC domain in the interval 6–187 (IIHIDCDCFY…LPVTKLHGVG (182 aa)). Positions 10 and 105 each coordinate Mg(2+). Residue Glu-106 is part of the active site.

The protein belongs to the DNA polymerase type-Y family. In terms of assembly, monomer. The cofactor is Mg(2+).

The protein resides in the cytoplasm. The catalysed reaction is DNA(n) + a 2'-deoxyribonucleoside 5'-triphosphate = DNA(n+1) + diphosphate. In terms of biological role, poorly processive, error-prone DNA polymerase involved in untargeted mutagenesis. Copies undamaged DNA at stalled replication forks, which arise in vivo from mismatched or misaligned primer ends. These misaligned primers can be extended by PolIV. Exhibits no 3'-5' exonuclease (proofreading) activity. May be involved in translesional synthesis, in conjunction with the beta clamp from PolIII. The sequence is that of DNA polymerase IV from Pseudomonas syringae pv. syringae (strain B728a).